A 277-amino-acid polypeptide reads, in one-letter code: MNKQSTQKLPHVTTRRLHDMKSEGEKISMLTAYDYTTARILDRAGVDVILVGDSASNVFAGHNTTLPITIDQMIYHARAVVRGVQAETSRAMVVIDMPFMSYQLSSEEALRNAGKIMKENECDAVKIEGGNVIVDTVKRITDVGIPVMGHLGLIPQSIYKFGSYKVRAREEQEAEELLRDAKLLEEAGAFALVLEKIPADLAAEVTASISIPTIGIGAGGACDGQVLVINDMLGLSTEFHPRFVRRYAELDRVIFDAVSRYVDDVRGGTFPGEDESY.

Residues Asp-53 and Asp-96 each contribute to the Mg(2+) site. 3-methyl-2-oxobutanoate is bound by residues 53-54 (DS), Asp-96, and Lys-126. Glu-128 contacts Mg(2+). Glu-195 functions as the Proton acceptor in the catalytic mechanism.

The protein belongs to the PanB family. In terms of assembly, homodecamer; pentamer of dimers. Requires Mg(2+) as cofactor.

Its subcellular location is the cytoplasm. The enzyme catalyses 3-methyl-2-oxobutanoate + (6R)-5,10-methylene-5,6,7,8-tetrahydrofolate + H2O = 2-dehydropantoate + (6S)-5,6,7,8-tetrahydrofolate. The protein operates within cofactor biosynthesis; (R)-pantothenate biosynthesis; (R)-pantoate from 3-methyl-2-oxobutanoate: step 1/2. Its function is as follows. Catalyzes the reversible reaction in which hydroxymethyl group from 5,10-methylenetetrahydrofolate is transferred onto alpha-ketoisovalerate to form ketopantoate. The sequence is that of 3-methyl-2-oxobutanoate hydroxymethyltransferase from Prosthecochloris aestuarii (strain DSM 271 / SK 413).